We begin with the raw amino-acid sequence, 150 residues long: 3-dehydroquinate dehydratase (150 aa).

The active-site Proton acceptor is tyrosine 26. Residues asparagine 77, histidine 83, and aspartate 90 each contribute to the substrate site. Histidine 103 serves as the catalytic Proton donor. Substrate contacts are provided by residues 104 to 105 (LS) and arginine 114.

It belongs to the type-II 3-dehydroquinase family. In terms of assembly, homododecamer.

It carries out the reaction 3-dehydroquinate = 3-dehydroshikimate + H2O. Its pathway is metabolic intermediate biosynthesis; chorismate biosynthesis; chorismate from D-erythrose 4-phosphate and phosphoenolpyruvate: step 3/7. Catalyzes a trans-dehydration via an enolate intermediate. The sequence is that of 3-dehydroquinate dehydratase from Pseudoalteromonas translucida (strain TAC 125).